Reading from the N-terminus, the 162-residue chain is uncharacterized protein (162 aa).

Residues 1–21 (MEGIMKKFFALMTLIAGISFS) form the signal peptide. The stretch at 32 to 118 (VIRESKFIAK…KKAELEKMVF (87 aa)) forms a coiled coil.

The protein belongs to the Skp family.

This is an uncharacterized protein from Aquifex aeolicus (strain VF5).